A 113-amino-acid polypeptide reads, in one-letter code: MAGFGLPNFGQLTEAFRKAQQIQQNAQKLQEELDAMEIEGSSPDGRASIWLSGNQQPLRVRIEPSLLAEGQDASETAILAALQSAYEHSTTTMKEQMEELTGGLNLNLPGMSE.

It belongs to the YbaB/EbfC family. Homodimer.

It is found in the cytoplasm. It localises to the nucleoid. Functionally, binds to DNA and alters its conformation. May be involved in regulation of gene expression, nucleoid organization and DNA protection. This chain is Nucleoid-associated protein PMT_0025, found in Prochlorococcus marinus (strain MIT 9313).